Reading from the N-terminus, the 257-residue chain is Imidazole glycerol phosphate synthase subunit HisF (257 aa).

Catalysis depends on residues D11 and D130.

The protein belongs to the HisA/HisF family. Heterodimer of HisH and HisF.

The protein localises to the cytoplasm. It carries out the reaction 5-[(5-phospho-1-deoxy-D-ribulos-1-ylimino)methylamino]-1-(5-phospho-beta-D-ribosyl)imidazole-4-carboxamide + L-glutamine = D-erythro-1-(imidazol-4-yl)glycerol 3-phosphate + 5-amino-1-(5-phospho-beta-D-ribosyl)imidazole-4-carboxamide + L-glutamate + H(+). The protein operates within amino-acid biosynthesis; L-histidine biosynthesis; L-histidine from 5-phospho-alpha-D-ribose 1-diphosphate: step 5/9. In terms of biological role, IGPS catalyzes the conversion of PRFAR and glutamine to IGP, AICAR and glutamate. The HisF subunit catalyzes the cyclization activity that produces IGP and AICAR from PRFAR using the ammonia provided by the HisH subunit. The protein is Imidazole glycerol phosphate synthase subunit HisF of Aeromonas hydrophila subsp. hydrophila (strain ATCC 7966 / DSM 30187 / BCRC 13018 / CCUG 14551 / JCM 1027 / KCTC 2358 / NCIMB 9240 / NCTC 8049).